We begin with the raw amino-acid sequence, 138 residues long: Cysteine desulfuration protein SufE (138 aa).

C51 functions as the Cysteine persulfide intermediate in the catalytic mechanism.

It belongs to the SufE family. Homodimer. Interacts with SufS.

The protein localises to the cytoplasm. Its pathway is cofactor biosynthesis; iron-sulfur cluster biosynthesis. Functionally, participates in cysteine desulfuration mediated by SufS. Cysteine desulfuration mobilizes sulfur from L-cysteine to yield L-alanine and constitutes an essential step in sulfur metabolism for biosynthesis of a variety of sulfur-containing biomolecules. Functions as a sulfur acceptor for SufS, by mediating the direct transfer of the sulfur atom from the S-sulfanylcysteine of SufS, an intermediate product of cysteine desulfuration process. The sequence is that of Cysteine desulfuration protein SufE from Shigella flexneri serotype 5b (strain 8401).